The primary structure comprises 126 residues: Small ribosomal subunit protein eS24 (126 aa).

The tract at residues 98-126 is disordered; sequence LYTKPQTSRKQRKEKKNRLKKAGKKTAKK. Basic residues predominate over residues 104–126; sequence TSRKQRKEKKNRLKKAGKKTAKK.

This sequence belongs to the eukaryotic ribosomal protein eS24 family.

This Dictyostelium discoideum (Social amoeba) protein is Small ribosomal subunit protein eS24 (rps24).